The sequence spans 324 residues: UDP-N-acetylenolpyruvoylglucosamine reductase (324 aa).

The FAD-binding PCMH-type domain occupies 36–203 (FRAGGLAELM…THAIFEGYAE (168 aa)). R183 is an active-site residue. S232 serves as the catalytic Proton donor. E302 is a catalytic residue.

The protein belongs to the MurB family. FAD serves as cofactor.

The protein resides in the cytoplasm. The catalysed reaction is UDP-N-acetyl-alpha-D-muramate + NADP(+) = UDP-N-acetyl-3-O-(1-carboxyvinyl)-alpha-D-glucosamine + NADPH + H(+). It functions in the pathway cell wall biogenesis; peptidoglycan biosynthesis. In terms of biological role, cell wall formation. The chain is UDP-N-acetylenolpyruvoylglucosamine reductase from Rhizobium meliloti (strain 1021) (Ensifer meliloti).